The chain runs to 353 residues: Carbamoyl phosphate synthase arginine-specific small chain (353 aa).

The tract at residues 1–162 is CPSase; it reads MEGYLVLEDG…EISTFGDGNK (162 aa). L-glutamine is bound by residues Ser-44, Gly-210, and Gly-212. Residues 163 to 349 enclose the Glutamine amidotransferase type-1 domain; that stretch reads HIALIDFGYK…LKNVIPARRE (187 aa). Catalysis depends on Cys-237, which acts as the Nucleophile. Residues Leu-238, Gln-241, Asn-279, and Tyr-282 each contribute to the L-glutamine site. Residues His-322 and Glu-324 contribute to the active site.

Belongs to the CarA family. As to quaternary structure, composed of two chains; the small (or glutamine) chain promotes the hydrolysis of glutamine to ammonia, which is used by the large (or ammonia) chain to synthesize carbamoyl phosphate. Tetramer of heterodimers (alpha,beta)4.

The catalysed reaction is hydrogencarbonate + L-glutamine + 2 ATP + H2O = carbamoyl phosphate + L-glutamate + 2 ADP + phosphate + 2 H(+). The enzyme catalyses L-glutamine + H2O = L-glutamate + NH4(+). It participates in amino-acid biosynthesis; L-arginine biosynthesis; carbamoyl phosphate from bicarbonate: step 1/1. Small subunit of the glutamine-dependent carbamoyl phosphate synthetase (CPSase). CPSase catalyzes the formation of carbamoyl phosphate from the ammonia moiety of glutamine, carbonate, and phosphate donated by ATP, constituting the first step of the biosynthetic pathway leading to arginine and/or urea. The small subunit (glutamine amidotransferase) binds and cleaves glutamine to supply the large subunit with the substrate ammonia. This Bacillus subtilis (strain 168) protein is Carbamoyl phosphate synthase arginine-specific small chain.